We begin with the raw amino-acid sequence, 310 residues long: MDASSSPSPSEESLKLELDDLQKQLNKKLRFEASVCSIHNLLRDHYSSSSPSLRKQFYIVVSRVATVLKTRYTATGFWVAGLSLFEEAERLVSDASEKKHLKSCVAQAKEQLSEVDNQPTESSQGYLFEGHLTVDREPPQPQWLVQQNLMSAFASIVGGESSNGPTENTIGETANLMQELINGLDMIIPDILDDGGPPRAPPASKEVVEKLPVIIFTEELLKKFGAEAECCICKENLVIGDKMQELPCKHTFHPPCLKPWLDEHNSCPICRHELPTDDQKYENWKEREKEAEEERKGAENAVRGGEYMYV.

An RING-type; atypical zinc finger spans residues 230–271; sequence CCICKENLVIGDKMQELPCKHTFHPPCLKPWLDEHNSCPICR. The stretch at 276–306 forms a coiled coil; it reads TDDQKYENWKEREKEAEEERKGAENAVRGGE. A compositionally biased stretch (basic and acidic residues) spans 285–298; that stretch reads KEREKEAEEERKGA. A disordered region spans residues 285–310; that stretch reads KEREKEAEEERKGAENAVRGGEYMYV.

Interacts with ABI3 (via C-terminus). In terms of processing, auto-ubiquitinated. In terms of tissue distribution, highly expressed in leaves and at lower levels in flowers and seeds.

It localises to the nucleus. Its subcellular location is the cytoplasm. It catalyses the reaction S-ubiquitinyl-[E2 ubiquitin-conjugating enzyme]-L-cysteine + [acceptor protein]-L-lysine = [E2 ubiquitin-conjugating enzyme]-L-cysteine + N(6)-ubiquitinyl-[acceptor protein]-L-lysine.. It functions in the pathway protein modification; protein ubiquitination. Functionally, E3 ubiquitin-protein ligase that acts as a negative regulator of abscisic acid (ABA) signaling. Mediates ubiquitination and subsequent proteasomal degradation of the transcription factor ABI3. This is E3 ubiquitin-protein ligase AIP2 (AIP2) from Arabidopsis thaliana (Mouse-ear cress).